The primary structure comprises 577 residues: Nuclear fusion protein tht1 (577 aa).

Residues 1–29 form the signal peptide; sequence MKFHPTRPFGLYFEFFIIISFFFTSESTG. The Lumenal portion of the chain corresponds to 30–404; it reads DVESFMKYSN…MNVYFKGLSN (375 aa). Asparagine 163 and asparagine 372 each carry an N-linked (GlcNAc...) asparagine glycan. The chain crosses the membrane as a helical span at residues 405 to 425; the sequence is IISSFAFIGFTLFATLSSLFF. At 426–433 the chain is on the cytoplasmic side; it reads KVLKIHRR. The helical transmembrane segment at 434–454 threads the bilayer; sequence PIIVFGSLSIIFIHIYCFKIT. Residues 455-470 are Lumenal-facing; sequence SWVNLYGWITCTIART. The chain crosses the membrane as a helical span at residues 471-491; the sequence is LSFIKLNIRTFYLTAFLCALL. Residues 492 to 577 lie on the Cytoplasmic side of the membrane; the sequence is NFLRYLKYRN…ESLEQSPWWD (86 aa).

This sequence belongs to the KAR5 family. N-glycosylated.

It localises to the endoplasmic reticulum membrane. The protein resides in the nucleus membrane. Functionally, required for nuclear membrane fusion during karyogamy. The sequence is that of Nuclear fusion protein tht1 (tht1) from Schizosaccharomyces pombe (strain 972 / ATCC 24843) (Fission yeast).